The chain runs to 64 residues: uncharacterized protein (64 aa).

Widely expressed; not found in breast.

This is an uncharacterized protein from Homo sapiens (Human).